The primary structure comprises 577 residues: MPKTISVRVTTMDAELEFAIQPNTTGKQLFDQVVKTIGLREVWFFGLQYQDTKAFSTWLKLNKKVTAQDVRKESPLLFKFRAKFYPEDVSEELIQDITQRLFFLQVKEGILNDDIYCPPETAVLLASYAVQSKYGDFNKEVHKSGYLAGDKLLPQRVLEQHKLNKDQWEERIQVWHEEHRGMLREDAVLEYLKIAQDLEMYGVNYFSIKNKKGSELWLGVDALGLNIYEQNDRLTPKIGFPWSEIRNISFNDKKFVIKPIDKKAPDFVFYAPRLRINKRILALCMGNHELYMRRRKPDTIEVQQMKAQAREEKHQKQMERALLENEKKKRELAEKEKEKIEREKEELMEKLKQIEEQTKKAQQELEEQTRRALELEQERKRAQSEAEKLAKERQEAEEAKEALLQASRDQKKTQEQLASEMAELTARVSQLEMARKKKESEAEECHQKAQMVQEDLEKTRAELKTAMSTPHVAEPAENEHDEQDENGAEASAELRADAMAKDRSEEERTTEAEKNERVQKHLKALTSELANARDESKKTTNDMIHAENMRLGRDKYKTLRQIRQGNTKQRIDEFESM.

In terms of domain architecture, FERM spans 2-295 (PKTISVRVTT…GNHELYMRRR (294 aa)). The residue at position 74 (serine 74) is a Phosphoserine. N6-acetyllysine is present on lysine 79. The residue at position 83 (lysine 83) is an N6-succinyllysine. Residues 115-120 (IYCPPE) carry the [IL]-x-C-x-x-[DE] motif motif. The residue at position 116 (tyrosine 116) is a Phosphotyrosine. S-nitrosocysteine is present on cysteine 117. Lysine 139 and lysine 165 each carry N6-acetyllysine. Disordered regions lie at residues 322-342 (LLEN…KIER), 358-453 (TKKA…QMVQ), and 468-549 (STPH…AENM). A compositionally biased stretch (basic and acidic residues) spans 358-401 (TKKAQQELEEQTRRALELEQERKRAQSEAEKLAKERQEAEEAKE). Serine 407 is modified (phosphoserine). 2 stretches are compositionally biased toward basic and acidic residues: residues 438-447 (KESEAEECHQ) and 492-519 (AELR…ERVQ). Residue serine 527 is modified to Phosphoserine. Basic and acidic residues predominate over residues 531–549 (NARDESKKTTNDMIHAENM). At threonine 558 the chain carries Phosphothreonine; by ROCK2 and STK10.

In resting T-cells, part of a PAG1-NHERF1-MSN complex which is disrupted upon TCR activation. Interacts with NHERF1. Interacts with PPP1R16B. Interacts with PDZD8. Interacts with SELPLG and SYK; these interactions mediate the activation of SYK by SELPLG. Interacts with PDPN (via cytoplasmic domain); this interaction activates RHOA and promotes epithelial-mesenchymal transition. Interacts with SPN/CD43 cytoplasmic tail. Interacts with CD44. Interacts with ICAM2. Interacts with ICAM3 (via C-terminus). Interacts with PDZD8. Interacts with F-actin. Interacts with CD46. Interacts with PTPN6. In terms of processing, phosphorylation on Thr-558 is crucial for the formation of microvilli-like structures. Phosphorylation by ROCK2 suppresses the head-to-tail association of the N-terminal and C-terminal halves resulting in an opened conformation which is capable of actin and membrane-binding. Phosphorylation on Thr-558 by STK10 negatively regulates lymphocyte migration and polarization. Post-translationally, S-nitrosylation of Cys-117 is induced by interferon-gamma and oxidatively-modified low-densitity lipoprotein (LDL(ox)) implicating the iNOS-S100A8/9 transnitrosylase complex.

The protein resides in the cell membrane. The protein localises to the cytoplasm. Its subcellular location is the cytoskeleton. It is found in the apical cell membrane. It localises to the cell projection. The protein resides in the microvillus membrane. The protein localises to the microvillus. Its activity is regulated as follows. A head-to-tail association, of the N-terminal and C-terminal halves results in a closed conformation (inactive form) which is incapable of actin or membrane-binding. Ezrin-radixin-moesin (ERM) family protein that connects the actin cytoskeleton to the plasma membrane and thereby regulates the structure and function of specific domains of the cell cortex. Tethers actin filaments by oscillating between a resting and an activated state providing transient interactions between moesin and the actin cytoskeleton. Once phosphorylated on its C-terminal threonine, moesin is activated leading to interaction with F-actin and cytoskeletal rearrangement. These rearrangements regulate many cellular processes, including cell shape determination, membrane transport, and signal transduction. The role of moesin is particularly important in immunity acting on both T and B-cells homeostasis and self-tolerance, regulating lymphocyte egress from lymphoid organs. Modulates phagolysosomal biogenesis in macrophages. Participates also in immunologic synapse formation. This chain is Moesin, found in Rattus norvegicus (Rat).